A 99-amino-acid polypeptide reads, in one-letter code: Nucleoid-associated protein LCABL_24440 (99 aa).

This sequence belongs to the YbaB/EbfC family. Homodimer.

The protein resides in the cytoplasm. It is found in the nucleoid. Its function is as follows. Binds to DNA and alters its conformation. May be involved in regulation of gene expression, nucleoid organization and DNA protection. This Lacticaseibacillus casei (strain BL23) (Lactobacillus casei) protein is Nucleoid-associated protein LCABL_24440.